Here is a 126-residue protein sequence, read N- to C-terminus: Small ribosomal subunit protein uS8 (126 aa).

This sequence belongs to the universal ribosomal protein uS8 family. In terms of assembly, part of the 30S ribosomal subunit. Contacts proteins S5 and S12.

Functionally, one of the primary rRNA binding proteins, it binds directly to 16S rRNA central domain where it helps coordinate assembly of the platform of the 30S subunit. The sequence is that of Small ribosomal subunit protein uS8 from Nitratidesulfovibrio vulgaris (strain DSM 19637 / Miyazaki F) (Desulfovibrio vulgaris).